Reading from the N-terminus, the 114-residue chain is T cell receptor beta variable 27 (114 aa).

Residues 1–21 (MGPQLLGYVVLCLLGAGPLEA) form the signal peptide. Residues 22-114 (QVTQNPRYLI…TSLYFCASSL (93 aa)) enclose the Ig-like domain. A disulfide bond links Cys42 and Cys110. N-linked (GlcNAc...) asparagine glycosylation is present at Asn103.

Alpha-beta TR is a heterodimer composed of an alpha and beta chain; disulfide-linked. The alpha-beta TR is associated with the transmembrane signaling CD3 coreceptor proteins to form the TR-CD3 (TcR or TCR). The assembly of alpha-beta TR heterodimers with CD3 occurs in the endoplasmic reticulum where a single alpha-beta TR heterodimer associates with one CD3D-CD3E heterodimer, one CD3G-CD3E heterodimer and one CD247 homodimer forming a stable octameric structure. CD3D-CD3E and CD3G-CD3E heterodimers preferentially associate with TR alpha and TR beta chains, respectively. The association of the CD247 homodimer is the last step of TcR assembly in the endoplasmic reticulum and is required for transport to the cell surface.

It localises to the cell membrane. Its function is as follows. V region of the variable domain of T cell receptor (TR) beta chain that participates in the antigen recognition. Alpha-beta T cell receptors are antigen specific receptors which are essential to the immune response and are present on the cell surface of T lymphocytes. Recognize peptide-major histocompatibility (MH) (pMH) complexes that are displayed by antigen presenting cells (APC), a prerequisite for efficient T cell adaptive immunity against pathogens. Binding of alpha-beta TR to pMH complex initiates TR-CD3 clustering on the cell surface and intracellular activation of LCK that phosphorylates the ITAM motifs of CD3G, CD3D, CD3E and CD247 enabling the recruitment of ZAP70. In turn ZAP70 phosphorylates LAT, which recruits numerous signaling molecules to form the LAT signalosome. The LAT signalosome propagates signal branching to three major signaling pathways, the calcium, the mitogen-activated protein kinase (MAPK) kinase and the nuclear factor NF-kappa-B (NF-kB) pathways, leading to the mobilization of transcription factors that are critical for gene expression and essential for T cell growth and differentiation. The T cell repertoire is generated in the thymus, by V-(D)-J rearrangement. This repertoire is then shaped by intrathymic selection events to generate a peripheral T cell pool of self-MH restricted, non-autoaggressive T cells. Post-thymic interaction of alpha-beta TR with the pMH complexes shapes TR structural and functional avidity. The polypeptide is T cell receptor beta variable 27 (Homo sapiens (Human)).